We begin with the raw amino-acid sequence, 460 residues long: Cobyrinate a,c-diamide synthase (460 aa).

In terms of domain architecture, GATase cobBQ-type spans 248–440; that stretch reads KIAVARDAAF…THFHFGSSTK (193 aa). Cys331 acts as the Nucleophile in catalysis.

It belongs to the CobB/CbiA family. Mg(2+) serves as cofactor.

The enzyme catalyses cob(II)yrinate + 2 L-glutamine + 2 ATP + 2 H2O = cob(II)yrinate a,c diamide + 2 L-glutamate + 2 ADP + 2 phosphate + 2 H(+). Its pathway is cofactor biosynthesis; adenosylcobalamin biosynthesis; cob(II)yrinate a,c-diamide from sirohydrochlorin (anaerobic route): step 10/10. Catalyzes the ATP-dependent amidation of the two carboxylate groups at positions a and c of cobyrinate, using either L-glutamine or ammonia as the nitrogen source. In Priestia megaterium (Bacillus megaterium), this protein is Cobyrinate a,c-diamide synthase.